Consider the following 505-residue polypeptide: ATP synthase subunit alpha, cyanelle (505 aa).

170 to 177 contributes to the ATP binding site; the sequence is GDRQTGKT.

The protein belongs to the ATPase alpha/beta chains family. In terms of assembly, F-type ATPases have 2 components, CF(1) - the catalytic core - and CF(0) - the membrane proton channel. CF(1) has five subunits: alpha(3), beta(3), gamma(1), delta(1), epsilon(1). CF(0) has four main subunits: a, b, b' and c.

It is found in the plastid. The protein resides in the cyanelle thylakoid membrane. The catalysed reaction is ATP + H2O + 4 H(+)(in) = ADP + phosphate + 5 H(+)(out). Its function is as follows. Produces ATP from ADP in the presence of a proton gradient across the membrane. The alpha chain is a regulatory subunit. The sequence is that of ATP synthase subunit alpha, cyanelle from Cyanophora paradoxa.